Reading from the N-terminus, the 289-residue chain is Growth hormone-regulated TBC protein 1 (289 aa).

The region spanning 41–211 is the Rab-GAP TBC domain; it reads LVILTKRAIK…RIWDCLFNEG (171 aa).

Functionally, may act as a GTPase-activating protein for Rab family protein(s). This is Growth hormone-regulated TBC protein 1 (Grtp1) from Rattus norvegicus (Rat).